The following is a 360-amino-acid chain: GDSL esterase/lipase At1g58430 (360 aa).

Residues 1–23 form the signal peptide; the sequence is MWTSKTISFTLFITTTLLGSCNA. N22 carries N-linked (GlcNAc...) asparagine glycosylation. S42 (nucleophile) is an active-site residue. N-linked (GlcNAc...) asparagine glycosylation is found at N104 and N326. Catalysis depends on residues D334 and H337.

It belongs to the 'GDSL' lipolytic enzyme family.

It localises to the secreted. The chain is GDSL esterase/lipase At1g58430 from Arabidopsis thaliana (Mouse-ear cress).